A 341-amino-acid polypeptide reads, in one-letter code: S-adenosylmethionine:tRNA ribosyltransferase-isomerase (341 aa).

It belongs to the QueA family. As to quaternary structure, monomer.

The protein resides in the cytoplasm. The catalysed reaction is 7-aminomethyl-7-carbaguanosine(34) in tRNA + S-adenosyl-L-methionine = epoxyqueuosine(34) in tRNA + adenine + L-methionine + 2 H(+). Its pathway is tRNA modification; tRNA-queuosine biosynthesis. Functionally, transfers and isomerizes the ribose moiety from AdoMet to the 7-aminomethyl group of 7-deazaguanine (preQ1-tRNA) to give epoxyqueuosine (oQ-tRNA). The polypeptide is S-adenosylmethionine:tRNA ribosyltransferase-isomerase (Clostridioides difficile (strain 630) (Peptoclostridium difficile)).